We begin with the raw amino-acid sequence, 422 residues long: MLEKKTIAELDPVLWDAMQNEVRRQEEHIELIASENYVTPAVMQAQGSQLTNKYAEGYPGKRYYGGCEYVDIVEQLAIDRAKELFGAEYANVQPHSGSQANAAVYGALLSAGDTILGMDLAHGGHLTHGAKVSFSGKIYNSVLYGITADGVIDYADVRTKALESKPKMIVAGFSAYSQVIDWAKMREIADEVDAYLFVDMAHVAGLIAAGLYPNPLPHAHVVTTTTHKTLAGPRGGLILSACGDEDIYKKLNSSVFPANQGGPLMHVIAAKAVCFKEALEPSFKVYQAQVLKNAKAMVEVFKQRGFDVVSNGTENHLFLVSFIKQGLTGKQADAALGAANITVNKNSVPNDPQKPFVTSGIRVGSPSITRRGFSETDAATLAGWMCDVLESIGKDNHEQVIAETKTKVLDICKRLPVYGIGR.

(6S)-5,6,7,8-tetrahydrofolate is bound by residues Leu120 and 124–126; that span reads GHL. Lys228 carries the N6-(pyridoxal phosphate)lysine modification.

It belongs to the SHMT family. As to quaternary structure, homodimer. Pyridoxal 5'-phosphate serves as cofactor.

It localises to the cytoplasm. It catalyses the reaction (6R)-5,10-methylene-5,6,7,8-tetrahydrofolate + glycine + H2O = (6S)-5,6,7,8-tetrahydrofolate + L-serine. It participates in one-carbon metabolism; tetrahydrofolate interconversion. The protein operates within amino-acid biosynthesis; glycine biosynthesis; glycine from L-serine: step 1/1. In terms of biological role, catalyzes the reversible interconversion of serine and glycine with tetrahydrofolate (THF) serving as the one-carbon carrier. This reaction serves as the major source of one-carbon groups required for the biosynthesis of purines, thymidylate, methionine, and other important biomolecules. Also exhibits THF-independent aldolase activity toward beta-hydroxyamino acids, producing glycine and aldehydes, via a retro-aldol mechanism. This is Serine hydroxymethyltransferase from Actinobacillus succinogenes (strain ATCC 55618 / DSM 22257 / CCUG 43843 / 130Z).